The following is a 428-amino-acid chain: Palmitoyltransferase ZDHHC23-B (428 aa).

The Cytoplasmic portion of the chain corresponds to Met-1–Gln-82. A helical transmembrane segment spans residues Ile-83–His-99. The Lumenal segment spans residues Ile-100–Tyr-105. The chain crosses the membrane as a helical span at residues Leu-106–Phe-125. At Thr-126–Arg-132 the chain is on the cytoplasmic side. The chain crosses the membrane as a helical span at residues Thr-133 to Thr-153. Topologically, residues Gln-154 to Glu-160 are lumenal. The helical transmembrane segment at Val-161–Met-181 threads the bilayer. Over Leu-182 to Thr-294 the chain is Cytoplasmic. Positions Asn-250 to Leu-300 constitute a DHHC domain. Cys-280 (S-palmitoyl cysteine intermediate) is an active-site residue. A helical transmembrane segment spans residues Phe-295 to Ala-315. The Lumenal portion of the chain corresponds to Ser-316–Ser-350. A helical transmembrane segment spans residues Ile-351 to Val-371. Residues Thr-372–Val-428 lie on the Cytoplasmic side of the membrane.

It belongs to the DHHC palmitoyltransferase family.

The protein resides in the golgi apparatus membrane. Its subcellular location is the golgi apparatus. It is found in the trans-Golgi network membrane. The enzyme catalyses L-cysteinyl-[protein] + hexadecanoyl-CoA = S-hexadecanoyl-L-cysteinyl-[protein] + CoA. Its function is as follows. Palmitoyltransferase that could catalyze the addition of palmitate onto various protein substrates and be involved in a variety of cellular processes. This is Palmitoyltransferase ZDHHC23-B from Danio rerio (Zebrafish).